We begin with the raw amino-acid sequence, 720 residues long: Replication restart protein PriA (720 aa).

The 167-residue stretch at 200 to 366 (ILMKNCFTSW…LHKKCFYIKF (167 aa)) folds into the Helicase ATP-binding domain. Residue 213 to 220 (KNNFYLKV) coordinates ATP. A DEAH box motif is present at residues 309-312 (NQEH). Zn(2+) is bound by residues Cys-425, Cys-428, Cys-434, Cys-437, Cys-452, Cys-455, Cys-465, and Cys-468.

This sequence belongs to the helicase family. PriA subfamily. In terms of assembly, component of the replication restart primosome. Zn(2+) is required as a cofactor.

It catalyses the reaction Couples ATP hydrolysis with the unwinding of duplex DNA by translocating in the 3'-5' direction.. It carries out the reaction ATP + H2O = ADP + phosphate + H(+). In terms of biological role, initiates the restart of stalled replication forks, which reloads the replicative helicase on sites other than the origin of replication. Recognizes and binds to abandoned replication forks and remodels them to uncover a helicase loading site. Promotes assembly of the primosome at these replication forks. This is Replication restart protein PriA from Buchnera aphidicola subsp. Schizaphis graminum (strain Sg).